A 511-amino-acid polypeptide reads, in one-letter code: Exodeoxyribonuclease 7 large subunit (511 aa).

It belongs to the XseA family. As to quaternary structure, heterooligomer composed of large and small subunits.

It localises to the cytoplasm. It catalyses the reaction Exonucleolytic cleavage in either 5'- to 3'- or 3'- to 5'-direction to yield nucleoside 5'-phosphates.. Its function is as follows. Bidirectionally degrades single-stranded DNA into large acid-insoluble oligonucleotides, which are then degraded further into small acid-soluble oligonucleotides. This Brucella melitensis biotype 1 (strain ATCC 23456 / CCUG 17765 / NCTC 10094 / 16M) protein is Exodeoxyribonuclease 7 large subunit.